Here is a 328-residue protein sequence, read N- to C-terminus: Sterol demethylase protein B (328 aa).

Belongs to the NAD(P)-dependent epimerase/dehydratase family.

The catalysed reaction is a 3beta-hydroxy-4alpha-methylsteroid-4beta-carboxylate + NAD(+) = a 4alpha-methyl-3-oxosteroid + CO2 + NADH. It catalyses the reaction a 3beta-hydroxy-4alpha-methylsteroid-4beta-carboxylate + NADP(+) = a 4alpha-methyl-3-oxosteroid + CO2 + NADPH. It carries out the reaction 4beta-carboxy-4alpha-methyl-5alpha-cholesta-8,24-dien-3beta-ol + NAD(+) = 3-dehydro-4alpha-methylzymosterol + CO2 + NADH. The enzyme catalyses 4beta-carboxy-4alpha-methyl-5alpha-cholesta-8,24-dien-3beta-ol + NADP(+) = 3-dehydro-4alpha-methylzymosterol + CO2 + NADPH. The catalysed reaction is 3-dehydro-4alpha-methylzymosterol + NADPH + H(+) = 4alpha-methylzymosterol + NADP(+). It participates in steroid biosynthesis; sterol biosynthesis. In terms of biological role, participates in the biosynthesis of bacterial sterols. Together with SdmA, removes one methyl group from the C-4 position of 4,4-dimethylated steroid molecules. SdmB catalyzes an oxidative decarboxylation that results in reduction of the 3beta-hydroxy group at the C-3 carbon to an oxo group. It also functions as a ketoreductase that converts the C-3 oxo group back to a hydroxyl group after C-4 demethylation. In Methylococcus capsulatus (strain ATCC 33009 / NCIMB 11132 / Bath), this protein is Sterol demethylase protein B.